A 348-amino-acid polypeptide reads, in one-letter code: Holliday junction branch migration complex subunit RuvB (348 aa).

The tract at residues 4–186 is large ATPase domain (RuvB-L); sequence TDRIISANTV…FGIIQRLEFY (183 aa). ATP-binding positions include Ile-25, Arg-26, Gly-67, Lys-70, Thr-71, Thr-72, 133-135, Arg-176, Tyr-186, and Arg-223; that span reads EDY. Position 71 (Thr-71) interacts with Mg(2+). A small ATPAse domain (RuvB-S) region spans residues 187 to 257; sequence SVDDLAKIVY…IADKALTMLK (71 aa). The tract at residues 260-348 is head domain (RuvB-H); it reads PVGFDHMDHK…SSDQQQNLSL (89 aa). DNA-binding residues include Arg-315 and Arg-320.

Belongs to the RuvB family. Homohexamer. Forms an RuvA(8)-RuvB(12)-Holliday junction (HJ) complex. HJ DNA is sandwiched between 2 RuvA tetramers; dsDNA enters through RuvA and exits via RuvB. An RuvB hexamer assembles on each DNA strand where it exits the tetramer. Each RuvB hexamer is contacted by two RuvA subunits (via domain III) on 2 adjacent RuvB subunits; this complex drives branch migration. In the full resolvosome a probable DNA-RuvA(4)-RuvB(12)-RuvC(2) complex forms which resolves the HJ.

It localises to the cytoplasm. It catalyses the reaction ATP + H2O = ADP + phosphate + H(+). Functionally, the RuvA-RuvB-RuvC complex processes Holliday junction (HJ) DNA during genetic recombination and DNA repair, while the RuvA-RuvB complex plays an important role in the rescue of blocked DNA replication forks via replication fork reversal (RFR). RuvA specifically binds to HJ cruciform DNA, conferring on it an open structure. The RuvB hexamer acts as an ATP-dependent pump, pulling dsDNA into and through the RuvAB complex. RuvB forms 2 homohexamers on either side of HJ DNA bound by 1 or 2 RuvA tetramers; 4 subunits per hexamer contact DNA at a time. Coordinated motions by a converter formed by DNA-disengaged RuvB subunits stimulates ATP hydrolysis and nucleotide exchange. Immobilization of the converter enables RuvB to convert the ATP-contained energy into a lever motion, pulling 2 nucleotides of DNA out of the RuvA tetramer per ATP hydrolyzed, thus driving DNA branch migration. The RuvB motors rotate together with the DNA substrate, which together with the progressing nucleotide cycle form the mechanistic basis for DNA recombination by continuous HJ branch migration. Branch migration allows RuvC to scan DNA until it finds its consensus sequence, where it cleaves and resolves cruciform DNA. This is Holliday junction branch migration complex subunit RuvB from Francisella philomiragia subsp. philomiragia (strain ATCC 25017 / CCUG 19701 / FSC 153 / O#319-036).